Here is a 296-residue protein sequence, read N- to C-terminus: Protoheme IX farnesyltransferase (296 aa).

At 1–9 (MMFKQYLQV) the chain is on the cytoplasmic side. Residues 10–28 (TKPGIIFGNLISVIGGFLL) form a helical membrane-spanning segment. Topologically, residues 29 to 37 (ASKGSIDYP) are periplasmic. The chain crosses the membrane as a helical span at residues 38–56 (LFIYTLVGVSLVVASGCVF). Topologically, residues 57–78 (NNYIDRDIDRKMERTKNRVLVK) are cytoplasmic. Residues 79 to 97 (GLISPAVSLVYATLLGFAG) form a helical membrane-spanning segment. Residues 98 to 107 (FMLLWFGANP) are Periplasmic-facing. A helical membrane pass occupies residues 108–126 (LACWLGVMGFVVYVGVYSL). The Cytoplasmic portion of the chain corresponds to 127-197 (YMKRHSVYGT…YQAANIPVLP (71 aa)). Residues 198–216 (VVKGISVAKNHITLYIIAF) traverse the membrane as a helical segment. Residues 217–228 (AVATLMLSLGGY) are Periplasmic-facing. A helical transmembrane segment spans residues 229-247 (AGYKYLVVAAAVSVWWLGM). At 248–268 (ALRGYKVADDRIWARKLFGFS) the chain is on the cytoplasmic side. The chain crosses the membrane as a helical span at residues 269-287 (IIAITALSVMMSVDFMVPD). The Periplasmic segment spans residues 288–296 (SHTLLAAVW).

This sequence belongs to the UbiA prenyltransferase family. Protoheme IX farnesyltransferase subfamily.

The protein localises to the cell inner membrane. It catalyses the reaction heme b + (2E,6E)-farnesyl diphosphate + H2O = Fe(II)-heme o + diphosphate. It functions in the pathway porphyrin-containing compound metabolism; heme O biosynthesis; heme O from protoheme: step 1/1. Functionally, converts heme B (protoheme IX) to heme O by substitution of the vinyl group on carbon 2 of heme B porphyrin ring with a hydroxyethyl farnesyl side group. The polypeptide is Protoheme IX farnesyltransferase (Shigella sonnei (strain Ss046)).